A 357-amino-acid polypeptide reads, in one-letter code: Holliday junction branch migration complex subunit RuvB (357 aa).

The segment covering Met-1–Pro-15 has biased composition (low complexity). Residues Met-1–Ile-30 form a disordered region. The segment at Asp-13–Tyr-195 is large ATPase domain (RuvB-L). ATP contacts are provided by residues Leu-34, Arg-35, Gly-76, Lys-79, Thr-80, Thr-81, Glu-142–Phe-144, Arg-185, Tyr-195, and Arg-232. Residue Thr-80 participates in Mg(2+) binding. The tract at residues Asn-196–Asp-266 is small ATPAse domain (RuvB-S). The tract at residues Pro-269–Lys-357 is head domain (RuvB-H). DNA is bound by residues Arg-305, Arg-324, and Arg-329.

Belongs to the RuvB family. In terms of assembly, homohexamer. Forms an RuvA(8)-RuvB(12)-Holliday junction (HJ) complex. HJ DNA is sandwiched between 2 RuvA tetramers; dsDNA enters through RuvA and exits via RuvB. An RuvB hexamer assembles on each DNA strand where it exits the tetramer. Each RuvB hexamer is contacted by two RuvA subunits (via domain III) on 2 adjacent RuvB subunits; this complex drives branch migration. In the full resolvosome a probable DNA-RuvA(4)-RuvB(12)-RuvC(2) complex forms which resolves the HJ.

It is found in the cytoplasm. It catalyses the reaction ATP + H2O = ADP + phosphate + H(+). Its function is as follows. The RuvA-RuvB-RuvC complex processes Holliday junction (HJ) DNA during genetic recombination and DNA repair, while the RuvA-RuvB complex plays an important role in the rescue of blocked DNA replication forks via replication fork reversal (RFR). RuvA specifically binds to HJ cruciform DNA, conferring on it an open structure. The RuvB hexamer acts as an ATP-dependent pump, pulling dsDNA into and through the RuvAB complex. RuvB forms 2 homohexamers on either side of HJ DNA bound by 1 or 2 RuvA tetramers; 4 subunits per hexamer contact DNA at a time. Coordinated motions by a converter formed by DNA-disengaged RuvB subunits stimulates ATP hydrolysis and nucleotide exchange. Immobilization of the converter enables RuvB to convert the ATP-contained energy into a lever motion, pulling 2 nucleotides of DNA out of the RuvA tetramer per ATP hydrolyzed, thus driving DNA branch migration. The RuvB motors rotate together with the DNA substrate, which together with the progressing nucleotide cycle form the mechanistic basis for DNA recombination by continuous HJ branch migration. Branch migration allows RuvC to scan DNA until it finds its consensus sequence, where it cleaves and resolves cruciform DNA. This chain is Holliday junction branch migration complex subunit RuvB, found in Bordetella parapertussis (strain 12822 / ATCC BAA-587 / NCTC 13253).